A 224-amino-acid polypeptide reads, in one-letter code: Oxygen-evolving enhancer protein 3-1, chloroplastic (224 aa).

The transit peptide at 1-44 directs the protein to the chloroplast; sequence MASMGGLHGASPAVLEGSLKINGSSRLNGSGRVAVAQRSRLVVR. The transit peptide at 45–75 directs the protein to the thylakoid; it reads AQQSEETSRRSVIGLVAAGLAGGSFVQAVLA. The residue at position 189 (T189) is a Phosphothreonine. Y209 carries the phosphotyrosine modification. T212 bears the Phosphothreonine mark.

It belongs to the PsbQ family. Expressed in green tissue, with high steady-state mRNA levels in leaves. Not expressed in roots.

The protein localises to the plastid. Its subcellular location is the chloroplast thylakoid membrane. Its function is as follows. Required for photosystem II assembly/stability and photoautotrophic growth under low light conditions. The polypeptide is Oxygen-evolving enhancer protein 3-1, chloroplastic (PSBQ1) (Arabidopsis thaliana (Mouse-ear cress)).